We begin with the raw amino-acid sequence, 280 residues long: MAIRKYKPTSPGRRGASVSDFSEVTRSTPEKSLVRPLHGHGGRNAHGRITTRHKGGGHKRAYRVIDFRRNDKDGVNAKVAHIEYDPNRTANIALLHFLDGEKRYIIAPQGLSQGDVVESGPNADIKPGNNLPLRNIPAGTVIHAVELRPGGGAKLALSAGSSIQLLGKEGSYASLRMPSGEIRRVDVRCRATVGEVGNAEQANINWGKAGRMRWKGKRPSVRGVVMNPVDHPHGGGEGKTSGGRHPVSPWGKPEGRTRHPNKASNKLIVRRRRTGKKHGR.

Disordered regions lie at residues 1–58 (MAIR…GGGH) and 226–280 (MNPV…KHGR). 2 stretches are compositionally biased toward basic residues: residues 37 to 58 (LHGH…GGGH) and 268 to 280 (IVRR…KHGR).

Belongs to the universal ribosomal protein uL2 family. In terms of assembly, part of the 50S ribosomal subunit. Forms a bridge to the 30S subunit in the 70S ribosome.

Functionally, one of the primary rRNA binding proteins. Required for association of the 30S and 50S subunits to form the 70S ribosome, for tRNA binding and peptide bond formation. It has been suggested to have peptidyltransferase activity; this is somewhat controversial. Makes several contacts with the 16S rRNA in the 70S ribosome. In Mycolicibacterium paratuberculosis (strain ATCC BAA-968 / K-10) (Mycobacterium paratuberculosis), this protein is Large ribosomal subunit protein uL2.